Reading from the N-terminus, the 525-residue chain is GMP synthase [glutamine-hydrolyzing] (525 aa).

The Glutamine amidotransferase type-1 domain maps to 11 to 200; sequence PVLVVDFGAQ…LTEIAGLEQN (190 aa). C88 (nucleophile) is an active-site residue. Catalysis depends on residues H174 and E176. The 199-residue stretch at 201-399 folds into the GMPS ATP-PPase domain; the sequence is WTAANIAEEL…LGLPEEIVNR (199 aa). Residue 229 to 235 participates in ATP binding; the sequence is SGGVDSA.

Homodimer.

It catalyses the reaction XMP + L-glutamine + ATP + H2O = GMP + L-glutamate + AMP + diphosphate + 2 H(+). Its pathway is purine metabolism; GMP biosynthesis; GMP from XMP (L-Gln route): step 1/1. Its function is as follows. Catalyzes the synthesis of GMP from XMP. This is GMP synthase [glutamine-hydrolyzing] from Corynebacterium diphtheriae (strain ATCC 700971 / NCTC 13129 / Biotype gravis).